Reading from the N-terminus, the 428-residue chain is Gamma-glutamyl phosphate reductase (428 aa).

This sequence belongs to the gamma-glutamyl phosphate reductase family.

Its subcellular location is the cytoplasm. The enzyme catalyses L-glutamate 5-semialdehyde + phosphate + NADP(+) = L-glutamyl 5-phosphate + NADPH + H(+). The protein operates within amino-acid biosynthesis; L-proline biosynthesis; L-glutamate 5-semialdehyde from L-glutamate: step 2/2. In terms of biological role, catalyzes the NADPH-dependent reduction of L-glutamate 5-phosphate into L-glutamate 5-semialdehyde and phosphate. The product spontaneously undergoes cyclization to form 1-pyrroline-5-carboxylate. In Anaeromyxobacter sp. (strain Fw109-5), this protein is Gamma-glutamyl phosphate reductase.